Reading from the N-terminus, the 291-residue chain is Phosphatidylglycerol--prolipoprotein diacylglyceryl transferase (291 aa).

The next 4 helical transmembrane spans lie at 24-44, 64-84, 99-119, and 125-145; these read WYALAYIGGIMLGWLYARALL, FILWVTIGIILGGRTGYVLFY, IWKGGMSFHGGFMGCVVAVIL, and GLPILSLGDVATAVGPIGLFL. Arg-147 contacts a 1,2-diacyl-sn-glycero-3-phospho-(1'-sn-glycerol). The next 3 membrane-spanning stretches (helical) occupy residues 187–207, 211–231, and 247–267; these read ATLEGLVLFTILALMIRAGAL, GLVLGSFITLYAMARIAGEFF, and MGMLLSAPMIIAGLAIICVAW.

This sequence belongs to the Lgt family.

It localises to the cell inner membrane. The enzyme catalyses L-cysteinyl-[prolipoprotein] + a 1,2-diacyl-sn-glycero-3-phospho-(1'-sn-glycerol) = an S-1,2-diacyl-sn-glyceryl-L-cysteinyl-[prolipoprotein] + sn-glycerol 1-phosphate + H(+). It functions in the pathway protein modification; lipoprotein biosynthesis (diacylglyceryl transfer). Its function is as follows. Catalyzes the transfer of the diacylglyceryl group from phosphatidylglycerol to the sulfhydryl group of the N-terminal cysteine of a prolipoprotein, the first step in the formation of mature lipoproteins. The polypeptide is Phosphatidylglycerol--prolipoprotein diacylglyceryl transferase (Nitrobacter hamburgensis (strain DSM 10229 / NCIMB 13809 / X14)).